The sequence spans 306 residues: uncharacterized protein (306 aa).

The interval aspartate 287–serine 306 is disordered.

Belongs to the aldo/keto reductase family.

It is found in the cytoplasm. The protein resides in the nucleus. This is an uncharacterized protein from Schizosaccharomyces pombe (strain 972 / ATCC 24843) (Fission yeast).